The chain runs to 225 residues: ATP-dependent Clp protease proteolytic subunit (225 aa).

S126 acts as the Nucleophile in catalysis. H151 is an active-site residue.

This sequence belongs to the peptidase S14 family. As to quaternary structure, fourteen ClpP subunits assemble into 2 heptameric rings which stack back to back to give a disk-like structure with a central cavity, resembling the structure of eukaryotic proteasomes.

It localises to the cytoplasm. The catalysed reaction is Hydrolysis of proteins to small peptides in the presence of ATP and magnesium. alpha-casein is the usual test substrate. In the absence of ATP, only oligopeptides shorter than five residues are hydrolyzed (such as succinyl-Leu-Tyr-|-NHMec, and Leu-Tyr-Leu-|-Tyr-Trp, in which cleavage of the -Tyr-|-Leu- and -Tyr-|-Trp bonds also occurs).. Functionally, cleaves peptides in various proteins in a process that requires ATP hydrolysis. Has a chymotrypsin-like activity. Plays a major role in the degradation of misfolded proteins. The protein is ATP-dependent Clp protease proteolytic subunit of Psychrobacter arcticus (strain DSM 17307 / VKM B-2377 / 273-4).